Reading from the N-terminus, the 617-residue chain is Proline--tRNA ligase (617 aa).

This sequence belongs to the class-II aminoacyl-tRNA synthetase family. ProS type 1 subfamily. In terms of assembly, homodimer.

The protein localises to the cytoplasm. The catalysed reaction is tRNA(Pro) + L-proline + ATP = L-prolyl-tRNA(Pro) + AMP + diphosphate. Its function is as follows. Catalyzes the attachment of proline to tRNA(Pro) in a two-step reaction: proline is first activated by ATP to form Pro-AMP and then transferred to the acceptor end of tRNA(Pro). As ProRS can inadvertently accommodate and process non-cognate amino acids such as alanine and cysteine, to avoid such errors it has two additional distinct editing activities against alanine. One activity is designated as 'pretransfer' editing and involves the tRNA(Pro)-independent hydrolysis of activated Ala-AMP. The other activity is designated 'posttransfer' editing and involves deacylation of mischarged Ala-tRNA(Pro). The misacylated Cys-tRNA(Pro) is not edited by ProRS. This chain is Proline--tRNA ligase, found in Streptococcus pneumoniae serotype 19F (strain G54).